The sequence spans 252 residues: Transmembrane ascorbate-dependent reductase CYB561 (252 aa).

Met-1 carries the N-acetylmethionine modification. At Met-1 to Tyr-17 the chain is on the cytoplasmic side. Residues Val-18–Met-38 form a helical membrane-spanning segment. Residues Phe-20 to Thr-221 enclose the Cytochrome b561 domain. Topologically, residues Tyr-39–Asn-52 are vesicular. Residues Val-53–Tyr-73 traverse the membrane as a helical segment. 3 residues coordinate heme b: His-54, Arg-74, and Lys-81. Residues Arg-74 to Val-86 lie on the Cytoplasmic side of the membrane. 2 residues coordinate L-ascorbate: Lys-81 and Lys-85. The helical transmembrane segment at Leu-87 to Phe-107 threads the bilayer. Heme b contacts are provided by residues His-88, Asp-117–Ser-120, and His-122. Over Glu-108–Cys-125 the chain is Vesicular. The helical transmembrane segment at Gly-126–Phe-146 threads the bilayer. Topologically, residues Pro-147 to Pro-159 are cytoplasmic. L-ascorbate is bound at residue Arg-154. Residues Gln-160–Leu-180 traverse the membrane as a helical segment. 2 residues coordinate heme b: His-161 and Glu-182. At Lys-181–Gly-199 the chain is on the vesicular side. The chain crosses the membrane as a helical span at residues Val-200–Leu-220. Over Thr-221–Gln-252 the chain is Cytoplasmic. Lys-226 serves as a coordination point for heme b. Ser-248 and Ser-250 each carry phosphoserine.

It depends on heme b as a cofactor.

The protein localises to the cytoplasmic vesicle. Its subcellular location is the secretory vesicle. It localises to the chromaffin granule membrane. The catalysed reaction is monodehydro-L-ascorbate radical(out) + L-ascorbate(in) = monodehydro-L-ascorbate radical(in) + L-ascorbate(out). Transmembrane reductase that uses ascorbate as an electron donor in the cytoplasm and transfers electrons across membranes to reduce monodehydro-L-ascorbate radical in the lumen of secretory vesicles. It is therefore involved the regeneration and homeostasis within secretory vesicles of ascorbate which in turn provides reducing equivalents needed to support the activity of intravesicular enzymes. The sequence is that of Transmembrane ascorbate-dependent reductase CYB561 (CYB561) from Ovis aries (Sheep).